A 128-amino-acid chain; its full sequence is Ig kappa chain V-V region T1 (128 aa).

A signal peptide spans 1–20 (MRTPAQFLGILLLWFPGIKC). A framework-1 region spans residues 21–43 (DIKMTQSPSSMYASLGERVTISC). Cysteine 43 and cysteine 108 are oxidised to a cystine. Residues 44–54 (KASQDINSYLT) form a complementarity-determining-1 region. A framework-2 region spans residues 55–69 (WFQQKPGKSPKTLLY). A complementarity-determining-2 region spans residues 70-76 (RANRLVD). Residues 77 to 108 (GVPSRFSGSGSGQDFSLTISSLEYEDMGIYYC) form a framework-3 region. Residues 109-117 (LQYDEFPLT) are complementarity-determining-3. Residues 118 to 127 (FGAGTKLELK) form a framework-4 region.

This Mus musculus (Mouse) protein is Ig kappa chain V-V region T1.